The following is a 364-amino-acid chain: Aminomethyltransferase (364 aa).

It belongs to the GcvT family. The glycine cleavage system is composed of four proteins: P, T, L and H.

It catalyses the reaction N(6)-[(R)-S(8)-aminomethyldihydrolipoyl]-L-lysyl-[protein] + (6S)-5,6,7,8-tetrahydrofolate = N(6)-[(R)-dihydrolipoyl]-L-lysyl-[protein] + (6R)-5,10-methylene-5,6,7,8-tetrahydrofolate + NH4(+). Functionally, the glycine cleavage system catalyzes the degradation of glycine. The polypeptide is Aminomethyltransferase (Enterobacter sp. (strain 638)).